The following is an 889-amino-acid chain: Oxysterol-binding protein-related protein 8 (889 aa).

N-acetylmethionine is present on Met-1. A disordered region spans residues 1–129; it reads MEAALADGEP…SLKVQKKNYR (129 aa). Ser-14, Ser-65, and Ser-68 each carry phosphoserine. Polar residues predominate over residues 62–71; it reads PSLSPASLHS. Basic and acidic residues-rich tracts occupy residues 73-88, 95-109, and 116-129; these read GFER…KDDS, SKSE…EKDS, and TKKE…KNYR. A PH domain is found at 148–265; it reads VIVMADWLKI…WMDALELALK (118 aa). Phosphoserine is present on residues Ser-314, Ser-328, and Ser-342. Positions 321 to 336 are enriched in basic and acidic residues; the sequence is FKDQDLYSDKSDKEND. Positions 321–374 are disordered; sequence FKDQDLYSDKSDKENDPEHDESDNEVLGKSEESDTDTSERQDDSYIDPEPVEPL. Residues 346–363 show a composition bias toward basic and acidic residues; sequence VLGKSEESDTDTSERQDD. Residues 420-425, 482-485, and 514-515 contribute to the a 1,2-diacyl-sn-glycero-3-phospho-(1D-myo-inositol 4-phosphate) site; these read LSRVVL, KPYN, and HH. A 1,2-diacyl-sn-glycero-3-phospho-L-serine contacts are provided by residues 420–425 and Asn-485; that span reads LSRVVL. Ser-540 contacts a 1,2-diacyl-sn-glycero-3-phospho-L-serine. The a 1,2-diacyl-sn-glycero-3-phospho-(1D-myo-inositol 4-phosphate) site is built by Lys-706, Glu-710, and Arg-714. The interval 772 to 823 is disordered; it reads HRTPMVSVPKMKHKPTRQQKKVVKGYSSPEPDIQDSSGSEAQSVKPSTRRKK. Residues 781 to 794 show a composition bias toward basic residues; that stretch reads KMKHKPTRQQKKVV. A compositionally biased stretch (polar residues) spans 805–817; sequence QDSSGSEAQSVKP. Residues Ser-807, Ser-808, Ser-810, and Ser-814 each carry the phosphoserine modification. The chain crosses the membrane as a helical span at residues 871 to 888; the sequence is YFVIFLLILLQVIINFIF.

This sequence belongs to the OSBP family. In terms of assembly, interacts with SPAG5. Interacts with NUP62. In terms of tissue distribution, widely expressed. Most abundant in liver, spleen, kidney, brain and adipose tissue.

Its subcellular location is the endoplasmic reticulum membrane. It is found in the nucleus membrane. In terms of biological role, lipid transporter involved in lipid countertransport between the endoplasmic reticulum and the plasma membrane: specifically exchanges phosphatidylserine with phosphatidylinositol 4-phosphate (PI4P), delivering phosphatidylserine to the plasma membrane in exchange for PI4P, which is degraded by the SAC1/SACM1L phosphatase in the endoplasmic reticulum. Binds phosphatidylserine and PI4P in a mutually exclusive manner. Binds oxysterol, 25-hydroxycholesterol and cholesterol. The sequence is that of Oxysterol-binding protein-related protein 8 from Mus musculus (Mouse).